The following is a 383-amino-acid chain: Putative 8-amino-7-oxononanoate synthase (383 aa).

Arg-22 provides a ligand contact to substrate. 109–110 (GY) contacts pyridoxal 5'-phosphate. His-134 is a binding site for substrate. Pyridoxal 5'-phosphate is bound by residues Ser-182, 207 to 210 (DDAH), and 236 to 239 (TLSK). The residue at position 239 (Lys-239) is an N6-(pyridoxal phosphate)lysine. Thr-348 serves as a coordination point for substrate.

Belongs to the class-II pyridoxal-phosphate-dependent aminotransferase family. BioF subfamily. Homodimer. Pyridoxal 5'-phosphate is required as a cofactor.

The enzyme catalyses 6-carboxyhexanoyl-[ACP] + L-alanine + H(+) = (8S)-8-amino-7-oxononanoate + holo-[ACP] + CO2. Its pathway is cofactor biosynthesis; biotin biosynthesis. Functionally, catalyzes the decarboxylative condensation of pimeloyl-[acyl-carrier protein] and L-alanine to produce 8-amino-7-oxononanoate (AON), [acyl-carrier protein], and carbon dioxide. This chain is Putative 8-amino-7-oxononanoate synthase (bioF), found in Caulobacter sp. (strain K31).